Reading from the N-terminus, the 447-residue chain is Divalent metal cation transporter MntH (447 aa).

The next 11 helical transmembrane spans lie at 26–48, 65–85, 108–128, 140–160, 169–189, 212–232, 264–284, 304–324, 359–379, 383–403, and 426–446; these read AGFW…GYMD, TLLS…AMSA, GFLL…AEII, IPLI…LLLM, AIVA…VLLS, MLYL…LYLG, LFLA…LFYG, IVGA…LLAS, VLSV…EAKI, LTFS…PLVI, and TATI…LGLI.

This sequence belongs to the NRAMP family.

The protein resides in the cell membrane. H(+)-stimulated, divalent metal cation uptake system. In Pediococcus pentosaceus (strain ATCC 25745 / CCUG 21536 / LMG 10740 / 183-1w), this protein is Divalent metal cation transporter MntH.